Here is a 222-residue protein sequence, read N- to C-terminus: Protein GrpE (222 aa).

This sequence belongs to the GrpE family. As to quaternary structure, homodimer.

It localises to the cytoplasm. In terms of biological role, participates actively in the response to hyperosmotic and heat shock by preventing the aggregation of stress-denatured proteins, in association with DnaK and GrpE. It is the nucleotide exchange factor for DnaK and may function as a thermosensor. Unfolded proteins bind initially to DnaJ; upon interaction with the DnaJ-bound protein, DnaK hydrolyzes its bound ATP, resulting in the formation of a stable complex. GrpE releases ADP from DnaK; ATP binding to DnaK triggers the release of the substrate protein, thus completing the reaction cycle. Several rounds of ATP-dependent interactions between DnaJ, DnaK and GrpE are required for fully efficient folding. The sequence is that of Protein GrpE from Bartonella bacilliformis (strain ATCC 35685 / KC583 / Herrer 020/F12,63).